Here is a 224-residue protein sequence, read N- to C-terminus: UPF0758 protein Patl_0046 (224 aa).

One can recognise an MPN domain in the interval V102–I224. Zn(2+)-binding residues include H173, H175, and D186. A JAMM motif motif is present at residues H173–D186.

This sequence belongs to the UPF0758 family.

The protein is UPF0758 protein Patl_0046 of Pseudoalteromonas atlantica (strain T6c / ATCC BAA-1087).